Here is a 378-residue protein sequence, read N- to C-terminus: Flap endonuclease 1 (378 aa).

The segment at 1-104 (MGVKDLSKVI…SELEKRTERR (104 aa)) is N-domain. Residue Asp34 coordinates Mg(2+). DNA is bound by residues Arg47 and Arg70. Asp86 contacts Mg(2+). Positions 90–113 (PQMKTSELEKRTERRTEAEKQRND) are disordered. Residues 95–113 (SELEKRTERRTEAEKQRND) are compositionally biased toward basic and acidic residues. The tract at residues 122-253 (SVNKFEKRLV…KKAFELIKKY (132 aa)) is I-domain. The Mg(2+) site is built by Glu158, Glu160, Asp179, and Asp181. A DNA-binding site is contributed by Glu158. Residues Gly231 and Asp233 each coordinate DNA. Asp233 serves as a coordination point for Mg(2+). The segment at 336–344 (QQARIDSFF) is interaction with PCNA. The tract at residues 348–378 (KVVTSETTKRKNEEKNNLKKRGPSLGKKAKK) is disordered. Over residues 354–364 (TTKRKNEEKNN) the composition is skewed to basic and acidic residues. Residues 365 to 378 (LKKRGPSLGKKAKK) show a composition bias toward basic residues.

It belongs to the XPG/RAD2 endonuclease family. FEN1 subfamily. Interacts with PCNA. Three molecules of FEN1 bind to one PCNA trimer with each molecule binding to one PCNA monomer. PCNA stimulates the nuclease activity without altering cleavage specificity. Mg(2+) is required as a cofactor. Post-translationally, phosphorylated. Phosphorylation upon DNA damage induces relocalization to the nuclear plasma.

The protein resides in the nucleus. Its subcellular location is the nucleolus. It is found in the nucleoplasm. It localises to the mitochondrion. Functionally, structure-specific nuclease with 5'-flap endonuclease and 5'-3' exonuclease activities involved in DNA replication and repair. During DNA replication, cleaves the 5'-overhanging flap structure that is generated by displacement synthesis when DNA polymerase encounters the 5'-end of a downstream Okazaki fragment. It enters the flap from the 5'-end and then tracks to cleave the flap base, leaving a nick for ligation. Also involved in the long patch base excision repair (LP-BER) pathway, by cleaving within the apurinic/apyrimidinic (AP) site-terminated flap. Acts as a genome stabilization factor that prevents flaps from equilibrating into structures that lead to duplications and deletions. Also possesses 5'-3' exonuclease activity on nicked or gapped double-stranded DNA, and exhibits RNase H activity. Also involved in replication and repair of rDNA and in repairing mitochondrial DNA. The sequence is that of Flap endonuclease 1 from Brugia malayi (Filarial nematode worm).